A 259-amino-acid polypeptide reads, in one-letter code: UPF0246 protein PputW619_0896 (259 aa).

This sequence belongs to the UPF0246 family.

In Pseudomonas putida (strain W619), this protein is UPF0246 protein PputW619_0896.